Reading from the N-terminus, the 342-residue chain is MNTNDFDFELPEELIAQTPLEKRDSSKLLIIDHRQKTMVDSHFDHIIDQLNPGDALVMNNTRVLPARLYGEKPDTHGHVELLLLKNTQGDQWEVLAKPAKRLKVGSQVNFGDGRLKATIIDELEHGGRIVEFSYDGIFLEVLESLGEMPLPPYIHEKLEDAERYQTVYAKENGSAAAPTAGLHFTTDLLKKIEAKGVHLVYLTLHVGLGTFRPVSVDNLDEHDMHSEFYSLSEEAAQTLRDVKQAGGRVVAVGTTSIRTLETIGSKFQGDIQADSGWTNIFIKPGYQFKVVDAFSTNFHLPKSTLVMLVSAFAGRDFVLEAYRHAIDEKYRFFSFGDAMFVN.

Belongs to the QueA family. Monomer.

Its subcellular location is the cytoplasm. It catalyses the reaction 7-aminomethyl-7-carbaguanosine(34) in tRNA + S-adenosyl-L-methionine = epoxyqueuosine(34) in tRNA + adenine + L-methionine + 2 H(+). The protein operates within tRNA modification; tRNA-queuosine biosynthesis. Transfers and isomerizes the ribose moiety from AdoMet to the 7-aminomethyl group of 7-deazaguanine (preQ1-tRNA) to give epoxyqueuosine (oQ-tRNA). The sequence is that of S-adenosylmethionine:tRNA ribosyltransferase-isomerase from Streptococcus pyogenes serotype M6 (strain ATCC BAA-946 / MGAS10394).